A 1785-amino-acid polypeptide reads, in one-letter code: Mellein synthase (1785 aa).

The segment at 1-36 is disordered; it reads MATPDDPATPALSLSASNSSSPTAASSVPPPTGTSE. Residues 8 to 27 are compositionally biased toward low complexity; sequence ATPALSLSASNSSSPTAASS. Residues 39–464 enclose the Ketosynthase family 3 (KS3) domain; that stretch reads YDDVAIIGMS…GTVSHAIIEQ (426 aa). Residues Cys211, His346, and His386 each act as for beta-ketoacyl synthase activity in the active site. The tract at residues 575–888 is malonyl-CoA:ACP transacylase (MAT) domain; that stretch reads VWVFSGHGSH…AVAQLWTKGV (314 aa). Ser661 functions as the For malonyltransferase activity in the catalytic mechanism. Residues 933 to 1047 are N-terminal hotdog fold; sequence NNMLGQRMVV…ASWENEPSAN (115 aa). One can recognise a PKS/mFAS DH domain in the interval 933–1206; sequence NNMLGQRMVV…FTEVEATPTK (274 aa). The tract at residues 935 to 1203 is dehydratase (DH) domain; it reads MLGQRMVVAG…SIRFTEVEAT (269 aa). Residue His965 is the Proton acceptor; for dehydratase activity of the active site. Residues 1062–1206 are C-terminal hotdog fold; the sequence is GTRVSETFSV…FTEVEATPTK (145 aa). Asp1123 acts as the Proton donor; for dehydratase activity in catalysis. Positions 1418–1608 are ketoreductase (KR) domain; sequence GTYVLTGGLG…AIAFQWTAWR (191 aa). Positions 1681-1698 are enriched in polar residues; it reads QDQSAPASGNASDSSGRP. Positions 1681–1701 are disordered; it reads QDQSAPASGNASDSSGRPTAS. A Carrier domain is found at 1706-1781; it reads PWLDVKIREC…AMVGWFQKQF (76 aa). At Ser1741 the chain carries O-(pantetheine 4'-phosphoryl)serine.

The protein operates within secondary metabolite biosynthesis. In terms of biological role, polyketide synthase that produces (R)-mellein, a secondary metabolite that inhibits the germination of wheat (Triticum aestivum) and barrel medic (Medicago truncatula) seeds. Condensates 1 acetate starter unit and 4 extender malonate units. The nascent pentaketide intermediate then undergoes an aldol cyclization and is aromatized via dehydration. The (R)-O-methylmellein isolated from P.nodorum is most likely to be derived from (R)-mellein via an additional methylation at the hydroxyl group. Interestingly, no O-methyltransferase gene is encoded in the vicinity of MLNS on the chromosome. Thus, the O-methylation is likely to be catalyzed by an endogenous O-methyltransferase encoded elsewhere in the genome of P.nodorum. The protein is Mellein synthase of Phaeosphaeria nodorum (strain SN15 / ATCC MYA-4574 / FGSC 10173) (Glume blotch fungus).